The chain runs to 499 residues: Probable cytosol aminopeptidase (499 aa).

Mn(2+)-binding residues include K263 and D268. K275 is a catalytic residue. D286, D345, and E347 together coordinate Mn(2+). Residue R349 is part of the active site.

It belongs to the peptidase M17 family. It depends on Mn(2+) as a cofactor.

Its subcellular location is the cytoplasm. The catalysed reaction is Release of an N-terminal amino acid, Xaa-|-Yaa-, in which Xaa is preferably Leu, but may be other amino acids including Pro although not Arg or Lys, and Yaa may be Pro. Amino acid amides and methyl esters are also readily hydrolyzed, but rates on arylamides are exceedingly low.. The enzyme catalyses Release of an N-terminal amino acid, preferentially leucine, but not glutamic or aspartic acids.. Its function is as follows. Presumably involved in the processing and regular turnover of intracellular proteins. Catalyzes the removal of unsubstituted N-terminal amino acids from various peptides. The chain is Probable cytosol aminopeptidase from Bradyrhizobium sp. (strain BTAi1 / ATCC BAA-1182).